A 333-amino-acid polypeptide reads, in one-letter code: Ketol-acid reductoisomerase (NADP(+)) (333 aa).

A KARI N-terminal Rossmann domain is found at 1–171 (MSNDTQPKIA…GGARANIIKT (171 aa)). Residues 14–17 (YGSQ), Arg37, Thr42, and 72–75 (DMVQ) each bind NADP(+). The active site involves His97. Gly123 serves as a coordination point for NADP(+). In terms of domain architecture, KARI C-terminal knotted spans 172–317 (TFKEETETDL…KKLRAKMVWL (146 aa)). Asp180, Glu184, Glu216, and Glu220 together coordinate Mg(2+). Ser241 provides a ligand contact to substrate.

Belongs to the ketol-acid reductoisomerase family. Requires Mg(2+) as cofactor.

It catalyses the reaction (2R)-2,3-dihydroxy-3-methylbutanoate + NADP(+) = (2S)-2-acetolactate + NADPH + H(+). The enzyme catalyses (2R,3R)-2,3-dihydroxy-3-methylpentanoate + NADP(+) = (S)-2-ethyl-2-hydroxy-3-oxobutanoate + NADPH + H(+). The protein operates within amino-acid biosynthesis; L-isoleucine biosynthesis; L-isoleucine from 2-oxobutanoate: step 2/4. It participates in amino-acid biosynthesis; L-valine biosynthesis; L-valine from pyruvate: step 2/4. Involved in the biosynthesis of branched-chain amino acids (BCAA). Catalyzes an alkyl-migration followed by a ketol-acid reduction of (S)-2-acetolactate (S2AL) to yield (R)-2,3-dihydroxy-isovalerate. In the isomerase reaction, S2AL is rearranged via a Mg-dependent methyl migration to produce 3-hydroxy-3-methyl-2-ketobutyrate (HMKB). In the reductase reaction, this 2-ketoacid undergoes a metal-dependent reduction by NADPH to yield (R)-2,3-dihydroxy-isovalerate. The chain is Ketol-acid reductoisomerase (NADP(+)) from Xanthomonas euvesicatoria pv. vesicatoria (strain 85-10) (Xanthomonas campestris pv. vesicatoria).